A 223-amino-acid chain; its full sequence is N-terminal Xaa-Pro-Lys N-methyltransferase 1 (223 aa).

At M1 the chain carries N-acetylmethionine. T2 is subject to N-acetylthreonine; in N-terminal Xaa-Pro-Lys N-methyltransferase 1, N-terminally processed. S-adenosyl-L-methionine is bound by residues G69, R74, 91–93, 119–120, and Q135; these read DVT and LQ.

Belongs to the methyltransferase superfamily. NTM1 family.

The protein resides in the nucleus. It catalyses the reaction N-terminal L-alanyl-L-prolyl-L-lysyl-[protein] + 3 S-adenosyl-L-methionine = N-terminal N,N,N-trimethyl-L-alanyl-L-prolyl-L-lysyl-[protein] + 3 S-adenosyl-L-homocysteine + 3 H(+). It carries out the reaction N-terminal L-seryl-L-prolyl-L-lysyl-[protein] + 3 S-adenosyl-L-methionine = N-terminal N,N,N-trimethyl-L-seryl-L-prolyl-L-lysyl-[protein] + 3 S-adenosyl-L-homocysteine + 3 H(+). The enzyme catalyses N-terminal L-prolyl-L-prolyl-L-lysyl-[protein] + 2 S-adenosyl-L-methionine = N-terminal N,N-dimethyl-L-prolyl-L-prolyl-L-lysyl-[protein] + 2 S-adenosyl-L-homocysteine + 2 H(+). Its function is as follows. Distributive alpha-N-methyltransferase that methylates the N-terminus of target proteins containing the N-terminal motif [Ala/Gly/Pro/Ser]-Pro-Lys when the initiator Met is cleaved. Specifically catalyzes mono-, di- or tri-methylation of the exposed alpha-amino group of the Ala, Gly or Ser residue in the [Ala/Gly/Ser]-Pro-Lys motif and mono- or di-methylation of Pro in the Pro-Pro-Lys motif. Some of the substrates may be primed by NTMT2-mediated monomethylation. Catalyzes the trimethylation of the N-terminal Gly in CENPA (after removal of Met-1). Responsible for the N-terminal methylation of KLHL31, MYL2, MYL3, RB1, RCC1, RPL23A and SET. Required during mitosis for normal bipolar spindle formation and chromosome segregation via its action on RCC1. This is N-terminal Xaa-Pro-Lys N-methyltransferase 1 (Ntmt1) from Mus musculus (Mouse).